Consider the following 584-residue polypeptide: MRSIISAFILSLNFCTQPLVRGAPSAADWQELQKAVEGRLFTAEPLARPCFSTFQGKSVEPNVEECSTTKQHYLNSTFKTAAYAGFVHSYNEACASNVTDQCLLSADTFSTNGKNTSGTAPLTGPCNLGMLSEKYIAVSRAEDVQAAFRFAHRTGMPLSVKATGHDYAARSSLKGSLALWTRQLNDIAFNPSFTPVGGSSSPIAAMTVGGGANLGEVYKFADRHNVTFIGGSSGTVAAAGGYSLLGGHGTLTPTYGMGADRMLEATIVTPDGELRIANAHMNSDLFWALRGAGSATFGVVLNATFKVEPVMPLTLALMSFNSTGANTGPFLSLLMKHTNIWAEEGWGGPMSMSTLALVNPAMSVDAAKQSMKEVADYVSAQGGTVVLESLPSFYAFYTKYVEAASSTGTGAATFATFRTLPKRLHQSEEGRAAMTKTFRDIKAAGHDTFIFQTTPNKFPYEPGSNAVHPSWRDSYWLVGTSISWSSNDAGLEERMRVAAAVQEVSKNLTDLAPEGSMYPNEADPWTRNWAKEFWGEENYARLVQVKRKYDPHGLIGCWKCVGFEDKLMETESAFRCLGAFQKKR.

The first 22 residues, 1–22 (MRSIISAFILSLNFCTQPLVRG), serve as a signal peptide directing secretion. Residues Asn75, Asn97, Asn115, Asn225, Asn302, Asn321, and Asn507 are each glycosylated (N-linked (GlcNAc...) asparagine). The 183-residue stretch at 128–310 (LGMLSEKYIA…LNATFKVEPV (183 aa)) folds into the FAD-binding PCMH-type domain.

Belongs to the oxygen-dependent FAD-linked oxidoreductase family. Requires FAD as cofactor.

It functions in the pathway secondary metabolite biosynthesis. FAD-linked oxidoreductase; part of the gene cluster that mediates the biosynthesis of a tyrosine-derived cytochalasan acting as a fungal signal recognized by resistant rice plants and leads to avirulence in Pi33 resistant rice cultivars. The first step in the pathway is catalyzed by the hybrid PKS-NRPS ACE1, assisted by the enoyl reductase RAP1, that are responsible for fusion of the tyrosine precursor and the polyketide backbone. The polyketide synthase module (PKS) of ACE1 is responsible for the synthesis of the polyketide backbone and the downstream nonribosomal peptide synthetase (NRPS) amidates the carboxyl end of the polyketide with the tyrosine precursor. Because ACE1 lacks a designated enoylreductase (ER) domain, the required activity is provided the enoyl reductase RAP1. Reduction by the hydrolyase ORFZ, followed by dehydration and intra-molecular Diels-Alder cyclization by the Diels-Alderase ORF3 then yield the required isoindolone-fused macrocycle. A number of oxidative steps catalyzed by the tailoring enzymes identified within the cluster, including cytochrome P450 monooxygenases CYP1 to CYP4, the FAD-linked oxidoreductase OXR2 and the short-chain dehydrogenase/reductase OXR1, are further required to afford the final cytochalasans that confer avirulence and which have still to be identified. The monooxygenase CYP1 has been shown to be a site-selective C-18 hydroxylase whereas the function of CYP3 is the site-selective epoxidation of the C-6/C-7 olefin that is present in some intermediate compounds. Finally, SYN2 and RAP2 are not required for avirulence in Pi33 resistant rice cultivars. The polypeptide is FAD-linked oxidoreductase OXR2 (Pyricularia oryzae (strain 70-15 / ATCC MYA-4617 / FGSC 8958) (Rice blast fungus)).